A 618-amino-acid polypeptide reads, in one-letter code: Proline--tRNA ligase (618 aa).

It belongs to the class-II aminoacyl-tRNA synthetase family. ProS type 1 subfamily. As to quaternary structure, homodimer.

It is found in the cytoplasm. It catalyses the reaction tRNA(Pro) + L-proline + ATP = L-prolyl-tRNA(Pro) + AMP + diphosphate. In terms of biological role, catalyzes the attachment of proline to tRNA(Pro) in a two-step reaction: proline is first activated by ATP to form Pro-AMP and then transferred to the acceptor end of tRNA(Pro). As ProRS can inadvertently accommodate and process non-cognate amino acids such as alanine and cysteine, to avoid such errors it has two additional distinct editing activities against alanine. One activity is designated as 'pretransfer' editing and involves the tRNA(Pro)-independent hydrolysis of activated Ala-AMP. The other activity is designated 'posttransfer' editing and involves deacylation of mischarged Ala-tRNA(Pro). The misacylated Cys-tRNA(Pro) is not edited by ProRS. The sequence is that of Proline--tRNA ligase from Streptococcus pyogenes serotype M1.